Here is a 724-residue protein sequence, read N- to C-terminus: Polyribonucleotide nucleotidyltransferase (724 aa).

Asp-488 and Asp-494 together coordinate Mg(2+). The region spanning 555-614 (PRMITVKINPEKIRDVIGKGGSTIQALTKETGCTIDIGEDGTITIASTSSEGMAEAKRRI) is the KH domain. Residues 624-692 (GKIYNGTVLK…EKGRMRLSIK (69 aa)) enclose the S1 motif domain. The interval 697-724 (EEGDVPVAAPQAPGAGDAASQQQQQQQQ) is disordered. The span at 701-724 (VPVAAPQAPGAGDAASQQQQQQQQ) shows a compositional bias: low complexity.

This sequence belongs to the polyribonucleotide nucleotidyltransferase family. Mg(2+) serves as cofactor.

The protein resides in the cytoplasm. It carries out the reaction RNA(n+1) + phosphate = RNA(n) + a ribonucleoside 5'-diphosphate. Its function is as follows. Involved in mRNA degradation. Catalyzes the phosphorolysis of single-stranded polyribonucleotides processively in the 3'- to 5'-direction. The polypeptide is Polyribonucleotide nucleotidyltransferase (Ralstonia pickettii (strain 12J)).